We begin with the raw amino-acid sequence, 1007 residues long: SUPPRESSOR OF ABI3-5 (1007 aa).

2 disordered regions span residues 1–185 (MDPS…RDRE) and 204–269 (ESPH…FSAT). Composition is skewed to basic and acidic residues over residues 40 to 49 (PDERLMRDDV), 94 to 120 (YYHD…RYDG), 138 to 185 (HSRD…RDRE), and 204 to 214 (ESPHKRYEKSR). Basic residues predominate over residues 227–236 (RSPRGRSHGR). The segment covering 237–264 (SYREDSYEGDHWNESERRREYEDRHNQD) has biased composition (basic and acidic residues). Residues 272-352 (ATVVVKGLSM…RKLMFHYSQP (81 aa)) form the RRM 1 domain. Residues 378–407 (VPTDWICTICGCINFARRTSCFQCNEPKTK) form a RanBP2-type zinc finger. Positions 432-512 (HVLVVRGLDE…KILRVAYAKS (81 aa)) constitute an RRM 2 domain. 6 disordered regions span residues 556-581 (GEKQ…SAPQ), 631-656 (PDQN…SQQK), 725-755 (HETQ…STGQ), 771-797 (STSN…TLMG), 810-910 (ASSS…GITT), and 945-977 (SGLG…KKVD). Residues 631–645 (PDQNNESKVTENQPD) are compositionally biased toward polar residues. Low complexity-rich tracts occupy residues 778–793 (SALT…TTGG) and 823–835 (PSAS…VSGS). Residues 849–867 (THREQPQTSYRDRAAERRN) show a composition bias toward basic and acidic residues. Residues 928-974 (ESNVGNRMLRNMGWHEGSGLGKDGSGMKEPVQAQGVDRRAGLGSQQK) form the G-patch domain.

Interacts with the pre-spliceosomal component U2AF65A. Ubiquitous with highest expression in siliques toward the end of seed maturation.

It is found in the nucleus. In terms of biological role, splicing factor that controls alternative splicing of the developmental regulator ABI3. Reduces splicing of a cryptic intron in ABI3, leading to a decreased in ABI3-beta transcript. Regulates the splicing of the receptor-like kinase SNC4/LRKL-2.6. The sequence is that of SUPPRESSOR OF ABI3-5 from Arabidopsis thaliana (Mouse-ear cress).